A 403-amino-acid chain; its full sequence is Phosphopentomutase (403 aa).

Positions 13, 298, 303, 339, 340, and 351 each coordinate Mn(2+).

Belongs to the phosphopentomutase family. Mn(2+) is required as a cofactor.

Its subcellular location is the cytoplasm. It carries out the reaction 2-deoxy-alpha-D-ribose 1-phosphate = 2-deoxy-D-ribose 5-phosphate. The enzyme catalyses alpha-D-ribose 1-phosphate = D-ribose 5-phosphate. It functions in the pathway carbohydrate degradation; 2-deoxy-D-ribose 1-phosphate degradation; D-glyceraldehyde 3-phosphate and acetaldehyde from 2-deoxy-alpha-D-ribose 1-phosphate: step 1/2. Isomerase that catalyzes the conversion of deoxy-ribose 1-phosphate (dRib-1-P) and ribose 1-phosphate (Rib-1-P) to deoxy-ribose 5-phosphate (dRib-5-P) and ribose 5-phosphate (Rib-5-P), respectively. In Streptococcus pyogenes serotype M3 (strain ATCC BAA-595 / MGAS315), this protein is Phosphopentomutase.